We begin with the raw amino-acid sequence, 366 residues long: Di-N-acetylchitobiase (366 aa).

Positions 1 to 22 are cleaved as a signal peptide; the sequence is MALCGLPEFTLLLLPLLARLSA. The GH18 domain occupies 23–366; it reads GDCPCSEAAL…EMWGALKPRL (344 aa). Glu127 acts as the Proton donor in catalysis. N-linked (GlcNAc...) asparagine glycosylation is found at Asn131, Asn177, Asn212, Asn246, and Asn283.

The protein belongs to the glycosyl hydrolase 18 family.

Its subcellular location is the lysosome. Functionally, involved in the degradation of asparagine-linked glycoproteins. Hydrolyze of N-acetyl-beta-D-glucosamine (1-4)N-acetylglucosamine chitobiose core from the reducing end of the bond, it requires prior cleavage by glycosylasparaginase. The chain is Di-N-acetylchitobiase (Ctbs) from Mus musculus (Mouse).